Consider the following 125-residue polypeptide: Ribonuclease P protein component (125 aa).

This sequence belongs to the RnpA family. In terms of assembly, consists of a catalytic RNA component (M1 or rnpB) and a protein subunit.

The catalysed reaction is Endonucleolytic cleavage of RNA, removing 5'-extranucleotides from tRNA precursor.. RNaseP catalyzes the removal of the 5'-leader sequence from pre-tRNA to produce the mature 5'-terminus. It can also cleave other RNA substrates such as 4.5S RNA. The protein component plays an auxiliary but essential role in vivo by binding to the 5'-leader sequence and broadening the substrate specificity of the ribozyme. The sequence is that of Ribonuclease P protein component from Clostridium beijerinckii (strain ATCC 51743 / NCIMB 8052) (Clostridium acetobutylicum).